We begin with the raw amino-acid sequence, 178 residues long: ATP-dependent protease subunit HslV (178 aa).

Thr7 is an active-site residue. Positions 162, 165, and 168 each coordinate Na(+).

Belongs to the peptidase T1B family. HslV subfamily. As to quaternary structure, a double ring-shaped homohexamer of HslV is capped on each side by a ring-shaped HslU homohexamer. The assembly of the HslU/HslV complex is dependent on binding of ATP.

It localises to the cytoplasm. It carries out the reaction ATP-dependent cleavage of peptide bonds with broad specificity.. Its activity is regulated as follows. Allosterically activated by HslU binding. Its function is as follows. Protease subunit of a proteasome-like degradation complex believed to be a general protein degrading machinery. The sequence is that of ATP-dependent protease subunit HslV from Burkholderia cenocepacia (strain ATCC BAA-245 / DSM 16553 / LMG 16656 / NCTC 13227 / J2315 / CF5610) (Burkholderia cepacia (strain J2315)).